A 56-amino-acid polypeptide reads, in one-letter code: PI-stichotoxin-Hcr2p (56 aa).

The BPTI/Kunitz inhibitor domain maps to Cys-4–Cys-54. Disulfide bonds link Cys-4-Cys-54, Cys-13-Cys-37, and Cys-29-Cys-50.

It belongs to the venom Kunitz-type family. Sea anemone type 2 potassium channel toxin subfamily.

It is found in the secreted. It localises to the nematocyst. Its function is as follows. This recombinant serine protease inhibitor inhibits trypsin (Ki=100 nM). It may also inhibit the TRPV1 receptor of the pain pathway. It possesses anti-inflammatory activity in vitro. It blocks histamine influence on intracellular calcium concentration in murine bone marrow-derived macrophages (84% inhibition at 10 uM and 67.2% at 1 uM), which can indicate inhibition of H1-histamine receptor (HRH1). In vitro, it shows cytoprotective activity in the oxidative stress agent 6-hydroxydopamine (6-OHDA)-induced neurotoxicity model. In this model, it decreases reactive oxygen species (ROS) level, and increases cell viability in a correlated manner. In vivo, it shows analgesic activity, since it increases hot plate and tail flick withdrawal latencies, when using a mice thermal pain stimulation model. This is PI-stichotoxin-Hcr2p from Radianthus crispa (Leathery sea anemone).